We begin with the raw amino-acid sequence, 151 residues long: Neuroglobin (151 aa).

The 149-residue stretch at 1–149 (MELPEPELIR…VVQAMSRGWG (149 aa)) folds into the Globin domain. 2 residues coordinate heme b: His64 and His96.

It belongs to the globin family. In terms of assembly, monomer. Homodimer and homotetramer; disulfide-linked. Mainly monomeric but also detected as part of homodimers and homotetramers. Interacts with 14-3-3 proteins; regulates the phosphorylation of NGB. Could interact (ferrous form) with G-alpha(i) proteins (GTP-bound form). Post-translationally, phosphorylated during hypoxia by ERK1/ERK2. Phosphorylation regulates the heme pocket hexacoordination preventing the association of His-64 with the heme metal center. Thereby, promotes the access of dioxygen and nitrite to the heme and stimulates the nitrite reductase activity. Phosphorylation during hypoxia is stabilized by 14-3-3 proteins.

The protein resides in the cytoplasm. It is found in the cytosol. It localises to the mitochondrion matrix. It carries out the reaction Fe(III)-heme b-[protein] + nitric oxide + H2O = Fe(II)-heme b-[protein] + nitrite + 2 H(+). Its function is as follows. Monomeric globin with a bis-histidyl six-coordinate heme-iron atom through which it can bind dioxygen, carbon monoxide and nitric oxide. Could help transport oxygen and increase its availability to the metabolically active neuronal tissues, though its low quantity in tissues as well as its high affinity for dioxygen, which may limit its oxygen-releasing ability, argue against it. The ferrous/deoxygenated form exhibits a nitrite reductase activity and it could produce nitric oxide which in turn inhibits cellular respiration in response to hypoxia. In its ferrous/deoxygenated state, it may also exhibit GDI (Guanine nucleotide Dissociation Inhibitor) activity toward heterotrimeric G-alpha proteins, thereby regulating signal transduction to facilitate neuroprotective responses in the wake of hypoxia and associated oxidative stress. This is Neuroglobin from Bos taurus (Bovine).